Reading from the N-terminus, the 942-residue chain is ETEITPYGENEELLWRHRITTEVGDCGATMVALSDQKIVGFHSLGGISMNYFVPVTQELLDFLNSKTEKPLVPWRFSEDQVDVGGLYIHNDFDKFPFVKTIQKLVGFQNGHMIKYCGEGFTPVARSENRLSRQHVISGQRESFIHFVEASAKWRPIVTPMLGRLQPSALNREAYYKDVLKYDKPIRLGTVHEEAFQSAVINVIRILENAGFERGGVKACFDYGKIFNDLNLDAAMGALYAGKKKDYFVEATDEEIEEMFLRSAGKICANGHGVWSALLKAELRPAEKVAANKTRTFTSAPIDILFGAKAVVDDFNKQFYKRHLLGPWTVGINKFNKGWDLLARSLMRYEWFIDADGSQFDSSITPLLMNAVLTIRLYFMERDDITELMLRNLYTQIISTCMLAEDGLIVQKHRGNNSGQPSTVVDNTLCLMIAMEYARQRAISDGHLNMQMRYVCNGDDLLINANEEAKEVVQNKYEQYIKELELNYCFDDAFQSIEGVEFMSHKFMLRNGIYIPKLARHRIVAILEWQRSAEPQAIKSAILAACVEAFGYDDSTELIREYAISLEPVWGSFLPTDGEIEQLYLEGIAKQEVARCLAGVDDVCKFESAAPGTNEAVDEMLKAAGDDEALARANATSTSDTIPPARNVGADTTTPAKANPPSGRRPSSRSLIDNSIGGNGVQDVADRTSGIVFPVPTRKSTSLYLTPKVKLRATTEELRKYESTSLNPQQIDLRYSTQQELNDWIKASADGLGQTEEAFIDNILPGWIVHCIVNTTSSENRKAGSWRCVTNAGTADEEQVLYDIEPMYSAANPTMRAIMRHFSDLAGLVIAESFKQGRPLIPKGYIKAGVLDASSAARACDFVVRDRHDTATFVQVQNQVLVNRVSGITNWLFAQQCLALVLTRTWRAMTLRCRRGHPQPRLSASFLEVSTSCRARRRLGVQR.

Residues 1-90 (ETEITPYGEN…VDVGGLYIHN (90 aa)) enclose the Peptidase C4 domain. Cys-26 acts as the For nuclear inclusion protein A activity in catalysis. In terms of domain architecture, RdRp catalytic spans 349–472 (EWFIDADGSQ…NANEEAKEVV (124 aa)). The interval 633–678 (NATSTSDTIPPARNVGADTTTPAKANPPSGRRPSSRSLIDNSIGGN) is disordered. Low complexity predominate over residues 659 to 669 (PPSGRRPSSRS).

It belongs to the potyviridae genome polyprotein family. Post-translationally, genome polyprotein of potyviruses undergoes post-translational proteolytic processing by the main proteinase NIa-pro resulting in the production of at least ten individual proteins. The P1 proteinase and the HC-pro cleave only their respective C-termini autocatalytically. 6K1 is essential for proper proteolytic separation of P3 from CI.

Its subcellular location is the virion. It catalyses the reaction RNA(n) + a ribonucleoside 5'-triphosphate = RNA(n+1) + diphosphate. It carries out the reaction Hydrolyzes glutaminyl bonds, and activity is further restricted by preferences for the amino acids in P6 - P1' that vary with the species of potyvirus, e.g. Glu-Xaa-Xaa-Tyr-Xaa-Gln-|-(Ser or Gly) for the enzyme from tobacco etch virus. The natural substrate is the viral polyprotein, but other proteins and oligopeptides containing the appropriate consensus sequence are also cleaved.. Its function is as follows. Has RNA-binding and proteolytic activities. Functionally, an RNA-dependent RNA polymerase that plays an essential role in the virus replication. Involved in aphid transmission, cell-to-cell and systemis movement, encapsidation of the viral RNA and in the regulation of viral RNA amplification. The protein is Genome polyprotein of Brome streak virus (strain German) (BStV).